A 177-amino-acid chain; its full sequence is Alkyl hydroperoxide reductase AhpD (177 aa).

Cys-131 acts as the Proton donor in catalysis. Cysteines 131 and 134 form a disulfide. Cys-134 (cysteine sulfenic acid (-SOH) intermediate) is an active-site residue.

Belongs to the AhpD family. In terms of assembly, homotrimer.

It catalyses the reaction N(6)-[(R)-dihydrolipoyl]-L-lysyl-[lipoyl-carrier protein] + a hydroperoxide = N(6)-[(R)-lipoyl]-L-lysyl-[lipoyl-carrier protein] + an alcohol + H2O. In terms of biological role, antioxidant protein with alkyl hydroperoxidase activity. Required for the reduction of the AhpC active site cysteine residues and for the regeneration of the AhpC enzyme activity. This chain is Alkyl hydroperoxide reductase AhpD, found in Streptomyces avermitilis (strain ATCC 31267 / DSM 46492 / JCM 5070 / NBRC 14893 / NCIMB 12804 / NRRL 8165 / MA-4680).